The chain runs to 66 residues: Probable Sec-independent protein translocase protein TatE (66 aa).

Residues 1-21 (MEGISITKLLVIAVLIVLLFG) traverse the membrane as a helical segment. The segment at 46 to 66 (ETPAAKKSDGVEAAPRVENKE) is disordered.

Belongs to the TatA/E family. TatE subfamily.

The protein resides in the cell inner membrane. In terms of biological role, part of the twin-arginine translocation (Tat) system that transports large folded proteins containing a characteristic twin-arginine motif in their signal peptide across membranes. TatE shares overlapping functions with TatA. The chain is Probable Sec-independent protein translocase protein TatE from Edwardsiella ictaluri (strain 93-146).